The sequence spans 465 residues: Methylenetetrahydrofolate--tRNA-(uracil-5-)-methyltransferase TrmFO (465 aa).

FAD is bound at residue Gly-10–Gly-15.

This sequence belongs to the MnmG family. TrmFO subfamily. Requires FAD as cofactor.

It localises to the cytoplasm. The enzyme catalyses uridine(54) in tRNA + (6R)-5,10-methylene-5,6,7,8-tetrahydrofolate + NADH + H(+) = 5-methyluridine(54) in tRNA + (6S)-5,6,7,8-tetrahydrofolate + NAD(+). The catalysed reaction is uridine(54) in tRNA + (6R)-5,10-methylene-5,6,7,8-tetrahydrofolate + NADPH + H(+) = 5-methyluridine(54) in tRNA + (6S)-5,6,7,8-tetrahydrofolate + NADP(+). Its function is as follows. Catalyzes the folate-dependent formation of 5-methyl-uridine at position 54 (M-5-U54) in all tRNAs. The protein is Methylenetetrahydrofolate--tRNA-(uracil-5-)-methyltransferase TrmFO of Deinococcus radiodurans (strain ATCC 13939 / DSM 20539 / JCM 16871 / CCUG 27074 / LMG 4051 / NBRC 15346 / NCIMB 9279 / VKM B-1422 / R1).